A 512-amino-acid chain; its full sequence is SNF1-related protein kinase catalytic subunit alpha KIN11 (512 aa).

A Protein kinase domain is found at 20–272; that stretch reads YKLGKTLGIG…IPEIRQHRWF (253 aa). Residues 26–34 and Lys49 each bind ATP; that span reads LGIGSFGKV. The active-site Proton acceptor is Asp143. Ser165 carries the post-translational modification Phosphoserine. Position 176 is a phosphothreonine; by GRIK1 or GRIK2 (Thr176). An auto-inhibitory domain (AID) region spans residues 291 to 391; the sequence is AKKINEEIVQ…GARSQVPVDR (101 aa). The UBA domain maps to 293–333; the sequence is KINEEIVQEVVNMGFDRNQVLESLRNRTQNDATVTYYLLLD. Positions 295–512 are regulatory domain (RD); that stretch reads NEEIVQEVVN…AAFLTELRVI (218 aa). Residues 392-512 are PPI; the sequence is KWALGLQSHA…AAFLTELRVI (121 aa). The segment at 399–512 is interaction with PAD1 and SKP1; the sequence is SHAHPREIMN…AAFLTELRVI (114 aa). One can recognise a KA1 domain in the interval 463 to 511; sequence AMTSPTVIKFELQLYKAREEKYLLDIQRVNGPQFLFLDLCAAFLTELRV.

This sequence belongs to the protein kinase superfamily. CAMK Ser/Thr protein kinase family. SNF1 subfamily. As to quaternary structure, subunit of a probable heterotrimeric complex consisting of an alpha catalytic (KIN10 or KIN11) subunit, and a beta (KINB) and a gamma (KING or SNF4) non-catalytic regulatory subunits. Interacts with KINB2, KINB3, SNF4 and probably with KINB1 and KING1. Interacts with SKP1/ASK1, PAD1 and the N-terminus of PRL1. Potential subunit of a SCF ubiquitin ligase complex consisting of a SNF1-related protein kinase, SKP1 and CUL1. The association of the SCF complex with the proteasome may be mediated by PAD1 and seems to be inhibited by the interaction with PRL1. Interacts with DSP4. Interacts with the begomovirus AL2 protein and the curtovirus L2 protein. Interacts with ATAF1. Interacts with CIPK14. Interacts with FLZ proteins through their FLZ-type zinc finger domains. Interacts with GEBP/STKR1. Interacts with REM4.1 and REM4.2. Interacts with ADK2. Interacts with IDD8. Interacts with FLZ3, FLZ9, TCP3, TCP13, HB21/ZHD3 and HB23/ZHD10. Interacts with WRI1. Interacts with IPK2b. Interacts with FLZ6 and FLZ10. Sumoylated by SIZ1. In terms of processing, phosphorylated at Thr-176 under submergence. Autophosphorylated. Phosphorylated at Thr-176 by GRIK1/SNAK2 and GRIK2/SNAK1. As to expression, expressed in roots, shoots, flower buds, flowers, siliques and leaves. Restrictly expressed to the base of the leaf, the vascular tissue, and the hydathodes.

Its subcellular location is the plastid. The protein localises to the chloroplast. The protein resides in the cytoplasm. It localises to the endoplasmic reticulum. The enzyme catalyses L-seryl-[protein] + ATP = O-phospho-L-seryl-[protein] + ADP + H(+). The catalysed reaction is L-threonyl-[protein] + ATP = O-phospho-L-threonyl-[protein] + ADP + H(+). Inactivated by the begomovirus AL2 protein or the curtovirus L2 protein. Activated by phosphorylation at Thr-176 by GRIK1/SNAK2 and GRIK2/SNAK1. Inhibited by trehalose-6-phosphate. Its function is as follows. Catalytic subunit of the probable trimeric SNF1-related protein kinase (SnRK) complex, a central regulator of cellular energy homeostasis, which, in response to seemingly unrelated darkness, sugar and stress conditions, activates energy-producing pathways and inhibits energy-consuming processes. May play a role in a signal transduction cascade regulating gene expression and carbohydrate metabolism in higher plants. The SnRK complex may also be involved in the regulation of fatty acid synthesis by phosphorylation of acetyl-CoA carboxylase and in assimilation of nitrogen by phosphorylating nitrate reductase. In vitro, KIN11 exhibits kinase activity on sucrose phosphate synthase and the kinase activity is inhibited by PRL1. May be a subunit of a SCF ubiquitin ligase complex and thus be involved in proteasomal ubiquitination. Involved in innate antiviral defenses. Phosphorylates REM4.1 in vitro. Phosphorylates ADK2 in vitro. In Arabidopsis thaliana (Mouse-ear cress), this protein is SNF1-related protein kinase catalytic subunit alpha KIN11.